The primary structure comprises 658 residues: Secretin XcpQ (658 aa).

Residues 1–34 (MSQPLLRALFAPSSRSYVPAVLLSLALGIQAAHA) form the signal peptide. The interval 51-141 (AHWTINLKDA…TEAGGGQSAP (91 aa)) is N0. An N1 region spans residues 142 to 205 (DRLETRVIQV…DVIRQLDQKG (64 aa)). The tract at residues 206–279 (SHDYSVINLR…SLDTPTARSA (74 aa)) is N2. The segment at 280 to 365 (NTRVIRLRHN…VPRAQVLVEA (86 aa)) is N3. Residues 302-322 (SEGMKNNGGQGGEQTGGGRPS) form a disordered region. Gly residues predominate over residues 307–320 (NNGGQGGEQTGGGR). A secretin region spans residues 368–606 (VEISGDIQDA…VFLRPTVVRD (239 aa)). A s domain region spans residues 608-658 (AGLAALSGKKYSDIRVIDGTRGPEGRPSILPTNANQLFDGQAVDLRELMTE).

This sequence belongs to the bacterial secretin family. GSP D subfamily. Forms a cylindrical channel with 15 subunits. The closed pentadecameric channel is 170 Angstroms long and 140 Angstroms in diameter.

It localises to the cell outer membrane. Involved in a type II secretion system (T2SS, formerly general secretion pathway, GSP) for the export of proteins. This subunit forms the outer membrane channel. Among its substrates are PrpL, elastase LasB, chitin binding protein D (CbpD), aminopeptidase PaAP, and metalloprotease ImpA. The sequence is that of Secretin XcpQ from Pseudomonas aeruginosa (strain ATCC 15692 / DSM 22644 / CIP 104116 / JCM 14847 / LMG 12228 / 1C / PRS 101 / PAO1).